We begin with the raw amino-acid sequence, 199 residues long: Transcription regulator complex subunit bur6 (199 aa).

The disordered stretch occupies residues 106–199 (PPIKAERKTK…SEASSASGDE (94 aa)). Basic residues predominate over residues 112 to 121 (RKTKRPRARR). The span at 185 to 199 (SDKTTSEASSASGDE) shows a compositional bias: polar residues.

This sequence belongs to the NC2 alpha/DRAP1 family.

The protein localises to the nucleus. In terms of biological role, transcription regulator complex subunit that is essential for cell cycle progression. The sequence is that of Transcription regulator complex subunit bur6 from Schizosaccharomyces pombe (strain 972 / ATCC 24843) (Fission yeast).